The following is a 167-amino-acid chain: CS6 fimbrial subunit B (167 aa).

Residues M1–A21 form the signal peptide.

It localises to the fimbrium. The sequence is that of CS6 fimbrial subunit B (cssB) from Escherichia coli.